We begin with the raw amino-acid sequence, 345 residues long: DNA-directed RNA polymerase subunit alpha (345 aa).

The interval 1 to 233 is alpha N-terminal domain (alpha-NTD); the sequence is MVRNWCSLIR…KQLQVFVGLH (233 aa). The alpha C-terminal domain (alpha-CTD) stretch occupies residues 256-345; the sequence is LNDILLRHVE…EEMGEIQEEG (90 aa).

It belongs to the RNA polymerase alpha chain family. As to quaternary structure, homodimer. The RNAP catalytic core consists of 2 alpha, 1 beta, 1 beta' and 1 omega subunit. When a sigma factor is associated with the core the holoenzyme is formed, which can initiate transcription.

The enzyme catalyses RNA(n) + a ribonucleoside 5'-triphosphate = RNA(n+1) + diphosphate. Functionally, DNA-dependent RNA polymerase catalyzes the transcription of DNA into RNA using the four ribonucleoside triphosphates as substrates. The chain is DNA-directed RNA polymerase subunit alpha from Syntrophus aciditrophicus (strain SB).